The following is a 797-amino-acid chain: N-acetylneuraminate (7)9-O-acetyltransferase (797 aa).

Residues 1-18 (MAALAYNLGKREINHYFS) are Cytoplasmic-facing. A helical transmembrane segment spans residues 19–39 (VRSAKVLALVAVLLLAACHLA). The Lumenal portion of the chain corresponds to 40 to 313 (SRRYRGNDSC…QPRPPVTLIQ (274 aa)). Asn-46 is a glycosylation site (N-linked (GlcNAc...) asparagine). Ser-94 functions as the Acyl-ester intermediate in the catalytic mechanism. Asn-175 and Asn-187 each carry an N-linked (GlcNAc...) asparagine glycan. Residues Asp-270 and His-273 contribute to the active site. Residues 314–334 (KLAACFFTLSIIGYLIFYIIH) form a helical membrane-spanning segment. Residues 335–363 (RNAHRKNKPCTDLESGEEKKNIINTPVSS) are Cytoplasmic-facing. Residues 364–384 (LEILLQSFCKLGLIMAYFYMC) traverse the membrane as a helical segment. At 385–395 (DRANLFMKENK) the chain is on the lumenal side. Residues 396 to 416 (FYTHSSFFIPIIYILVLGVFY) form a helical membrane-spanning segment. At 417-439 (NENTKETKVLNREQTDEWKGWMQ) the chain is on the cytoplasmic side. A helical membrane pass occupies residues 440–460 (LVILIYHISGASTFLPVYMHI). Arg-461 is a topological domain (lumenal). Residues 462–482 (VLVAAYLFQTGYGHFSYFWIK) form a helical membrane-spanning segment. Topologically, residues 483 to 486 (GDFG) are cytoplasmic. The chain crosses the membrane as a helical span at residues 487-507 (IYRVCQVLFRLNFLVVVLCIV). Over 508 to 513 (MDRPYQ) the chain is Lumenal. A helical membrane pass occupies residues 514 to 534 (FYYFVPLVTVWFMVIYVTLAL). Residues 535 to 547 (WPQIIQKKANGNC) lie on the Cytoplasmic side of the membrane. The chain crosses the membrane as a helical span at residues 548–568 (FWHFGLLLKLGFLLLFICFLA). Residues 569–605 (YSQGAFEKIFSLWPLSKCFELKGNVYEWWFRWRLDRY) are Lumenal-facing. The helical transmembrane segment at 606 to 626 (VVFHGMLFAFIYLALQKRQIL) threads the bilayer. Residues 627–638 (SEGKGEPLFSNK) are Cytoplasmic-facing. Residues 639–659 (ISNFLLFISVVSFLTYSIWAS) traverse the membrane as a helical segment. Residues 660–671 (SCKNKAECNELH) are Lumenal-facing. Residues 672-692 (PSVSVVQILAFILIRNIPGYA) form a helical membrane-spanning segment. The Cytoplasmic portion of the chain corresponds to 693 to 698 (RSVYSS). The helical transmembrane segment at 699–719 (FFAWFGKISLELFICQYHIWL) threads the bilayer. Residues 720-725 (AADTRG) are Lumenal-facing. The helical transmembrane segment at 726–746 (ILVLIPGNPMLNIIVSTFIFV) threads the bilayer. Topologically, residues 747 to 770 (CVAHEISQITNDLAQIIIPKDNSS) are cytoplasmic. The chain crosses the membrane as a helical span at residues 771–791 (LLKRLACIAAFFCGLLILSSI). Over 792-797 (QDKSKH) the chain is Lumenal.

The protein belongs to the PC-esterase family. CASD1 subfamily. N-glycosylated. In terms of tissue distribution, highly expressed in peripheral B lymphocytes.

It is found in the golgi apparatus membrane. It carries out the reaction CMP-N-acetyl-beta-neuraminate + acetyl-CoA = CMP-N-acetyl-9-O-acetyl-beta-neuraminate + CoA. It catalyses the reaction a ganglioside GD3 (d18:1(4E)) + acetyl-CoA = a ganglioside Ac-O-7-GD3(d18:1(4E)) + CoA. The enzyme catalyses CMP-N-acetyl-beta-neuraminate + acetyl-CoA = CMP-N-acetyl-7-O-acetyl-beta-neuraminate + CoA. Its function is as follows. Key enzyme in the biosynthesis of O-acetylated (O-Ac) sialoglycans such as gangliosides O-AcGD3 and O-AcGD2, which affect various processes such as cell-cell interactions, host-pathogen recognition. Catalyzes the transfer of an acetyl group from a donor, the acetyl-coenzyme-A molecule (acetyl-CoA), to the C7/8/9 OH-position of a sialic acid residue. The primary site of O-acetyl group transfer on sialic acid seems to depend on cell type and can be C7, from which the O-acetyl group could subsequently migrate to the C8 and then to the C9 position, or at C9 with possibility of migrating to the C8 and then to the C7 position. Together with ST8SIA1 (GD3 synthase) it increases the levels of ganglioside Ac-O-7-GD3. Can transfer the acetyl group from acetyl-CoA to free sialate (N-acetylneuraminate, Neu5Ac) in vitro, but has preferred substrate specificity for CMP-activated sialate (CMP-Neu5Ac), resulting in the formation of 9-O-acetylated CMP-Neu5Ac (CMP-Neu5,9Ac2). CMP-Neu5,9Ac2 may be used by sialyltransferases as a sialate donor for glycoconjugate acceptors such as ganglioside GD3. O-acetylation at position C9 of ganglioside GD3 can counteract the pro-apoptotic effects of the ganglioside GD3 in tumor cells. This Homo sapiens (Human) protein is N-acetylneuraminate (7)9-O-acetyltransferase.